The primary structure comprises 338 residues: Electron transfer flavoprotein subunit alpha (338 aa).

275–303 (IYIACAISGAIQPLAGMTGSDCIIAINKD) is an FAD binding site.

It belongs to the ETF alpha-subunit/FixB family. In terms of assembly, heterodimer of an alpha and a beta subunit. Requires FAD as cofactor.

In terms of biological role, the electron transfer flavoprotein serves as a specific electron acceptor for other dehydrogenases. It transfers the electrons to the main respiratory chain via ETF-ubiquinone oxidoreductase (ETF dehydrogenase). This chain is Electron transfer flavoprotein subunit alpha (etfA), found in Megasphaera elsdenii.